Here is a 394-residue protein sequence, read N- to C-terminus: Alcohol dehydrogenase-like 3 (394 aa).

Zn(2+) is bound by residues C48, T50, H71, C101, C104, C107, C115, and C188. An alcohol is bound by residues T50 and H71. T50 is a binding site for NAD(+). NAD(+) contacts are provided by residues G213–G218, D237, K242, T283, V306, V306–I308, F333, and R383.

It belongs to the zinc-containing alcohol dehydrogenase family. Class-III subfamily. In terms of assembly, homodimer. Zn(2+) serves as cofactor.

The protein resides in the cytoplasm. It carries out the reaction a primary alcohol + NAD(+) = an aldehyde + NADH + H(+). The enzyme catalyses a secondary alcohol + NAD(+) = a ketone + NADH + H(+). The sequence is that of Alcohol dehydrogenase-like 3 from Arabidopsis thaliana (Mouse-ear cress).